Here is a 305-residue protein sequence, read N- to C-terminus: Ribonucleoside-diphosphate reductase small subunit (305 aa).

Residues Glu-64, Glu-94, and His-97 each coordinate Fe cation. The active site involves Tyr-101. A helical transmembrane segment spans residues 150–170 (ILMFLIVEGIYFISSFYSISL). Fe cation is bound by residues Glu-157, Glu-191, and His-194.

It belongs to the ribonucleoside diphosphate reductase small chain family. Heterotetramer composed of a homodimer of the large subunit (R1) and a homodimer of the small subunit (R2). Larger multisubunit protein complex are also active, composed of (R1)n(R2)n. Requires Fe cation as cofactor.

It is found in the host membrane. It carries out the reaction a 2'-deoxyribonucleoside 5'-diphosphate + [thioredoxin]-disulfide + H2O = a ribonucleoside 5'-diphosphate + [thioredoxin]-dithiol. Functionally, ribonucleoside-diphosphate reductase holoenzyme provides the precursors necessary for viral DNA synthesis. Allows virus growth in non-dividing cells, as well as reactivation from latency in infected hosts. Catalyzes the biosynthesis of deoxyribonucleotides from the corresponding ribonucleotides. The polypeptide is Ribonucleoside-diphosphate reductase small subunit (Homo sapiens (Human)).